The sequence spans 392 residues: GTPase Obg (392 aa).

In terms of domain architecture, Obg spans 1 to 159 (MKFVDEATIL…RDLQLELMLL (159 aa)). The disordered stretch occupies residues 127–148 (NTRFKSSVNRTPRQKTMGTPGD). The segment covering 129–143 (RFKSSVNRTPRQKTM) has biased composition (polar residues). The 174-residue stretch at 160–333 (ADVGMLGMPN…LCWDVMTFII (174 aa)) folds into the OBG-type G domain. Residues 166–173 (GMPNAGKS), 191–195 (FTTLV), 213–216 (DIPG), 283–286 (NKID), and 314–316 (SAA) contribute to the GTP site. Mg(2+) contacts are provided by Ser173 and Thr193. Residues 362-386 (EEAEAEAEDDEDWDDDWDEDDEEGV) are compositionally biased toward acidic residues. A disordered region spans residues 362 to 392 (EEAEAEAEDDEDWDDDWDEDDEEGVEFIYKR).

It belongs to the TRAFAC class OBG-HflX-like GTPase superfamily. OBG GTPase family. Monomer. The cofactor is Mg(2+).

It is found in the cytoplasm. Functionally, an essential GTPase which binds GTP, GDP and possibly (p)ppGpp with moderate affinity, with high nucleotide exchange rates and a fairly low GTP hydrolysis rate. Plays a role in control of the cell cycle, stress response, ribosome biogenesis and in those bacteria that undergo differentiation, in morphogenesis control. The chain is GTPase Obg from Klebsiella pneumoniae subsp. pneumoniae (strain ATCC 700721 / MGH 78578).